The chain runs to 566 residues: Class II hydrophobin FOXG_02748 (566 aa).

Positions M1–A22 are cleaved as a signal peptide. 4 disulfide bridges follow: C497-C546, C507-C537, C508-C520, and C547-C558.

This sequence belongs to the cerato-ulmin hydrophobin family. Homodimer. Homodimers further self-assemble to form highly ordered films at water-air interfaces through intermolecular interactions.

The protein localises to the secreted. It is found in the cell wall. Its function is as follows. Aerial growth, conidiation, and dispersal of filamentous fungi in the environment rely upon a capability of their secreting small amphipathic proteins called hydrophobins (HPBs) with low sequence identity. Class I can self-assemble into an outermost layer of rodlet bundles on aerial cell surfaces, conferring cellular hydrophobicity that supports fungal growth, development and dispersal; whereas Class II form highly ordered films at water-air interfaces through intermolecular interactions but contribute nothing to the rodlet structure. FOXG_02748 is a class II hydrophobin that is likely required for plant colonization. The sequence is that of Class II hydrophobin FOXG_02748 from Fusarium oxysporum f. sp. lycopersici (strain 4287 / CBS 123668 / FGSC 9935 / NRRL 34936) (Fusarium vascular wilt of tomato).